The chain runs to 329 residues: Putative glycosyltransferase CsbB (329 aa).

A run of 2 helical transmembrane segments spans residues 231–251 and 264–284; these read CFYTGIFILLLSIIYIIATFV and FTIISAVLFLGGVQLLSLGII.

Belongs to the glycosyltransferase 2 family. GtrB subfamily.

It is found in the cell membrane. The chain is Putative glycosyltransferase CsbB (csbB) from Bacillus subtilis (strain 168).